Reading from the N-terminus, the 144-residue chain is Large ribosomal subunit protein uL15 (144 aa).

The interval 1–59 (MELNNLKPAEGAKHAKRRVGRGIGSGLGKTAGRGHKGQKSRSGGFHKVGFEGGQMPLQR) is disordered. The span at 21 to 31 (RGIGSGLGKTA) shows a compositional bias: gly residues.

Belongs to the universal ribosomal protein uL15 family. As to quaternary structure, part of the 50S ribosomal subunit.

Its function is as follows. Binds to the 23S rRNA. The chain is Large ribosomal subunit protein uL15 from Burkholderia thailandensis (strain ATCC 700388 / DSM 13276 / CCUG 48851 / CIP 106301 / E264).